Reading from the N-terminus, the 338-residue chain is Fructose-1,6-bisphosphatase class 1 (338 aa).

Mg(2+) is bound by residues Glu94, Asp116, Leu118, and Asp119. Substrate is bound by residues 119–122 (DGSS), Asn210, and Lys276. Glu282 is a Mg(2+) binding site.

It belongs to the FBPase class 1 family. In terms of assembly, homotetramer. Mg(2+) is required as a cofactor.

The protein resides in the cytoplasm. The enzyme catalyses beta-D-fructose 1,6-bisphosphate + H2O = beta-D-fructose 6-phosphate + phosphate. It participates in carbohydrate biosynthesis; gluconeogenesis. This chain is Fructose-1,6-bisphosphatase class 1, found in Burkholderia thailandensis (strain ATCC 700388 / DSM 13276 / CCUG 48851 / CIP 106301 / E264).